A 389-amino-acid chain; its full sequence is Putative glutamate--cysteine ligase 2 (389 aa).

Belongs to the glutamate--cysteine ligase type 2 family. YbdK subfamily.

The catalysed reaction is L-cysteine + L-glutamate + ATP = gamma-L-glutamyl-L-cysteine + ADP + phosphate + H(+). ATP-dependent carboxylate-amine ligase which exhibits weak glutamate--cysteine ligase activity. This chain is Putative glutamate--cysteine ligase 2, found in Rhodospirillum rubrum (strain ATCC 11170 / ATH 1.1.1 / DSM 467 / LMG 4362 / NCIMB 8255 / S1).